We begin with the raw amino-acid sequence, 330 residues long: Ketol-acid reductoisomerase (NADP(+)) (330 aa).

Positions Met1 to Thr181 constitute a KARI N-terminal Rossmann domain. Residues Tyr24–Gln27, Arg47, Ser52, and Asp82–Gln85 each bind NADP(+). His107 is an active-site residue. Residue Gly133 coordinates NADP(+). Positions Thr182–Gln327 constitute a KARI C-terminal knotted domain. Residues Asp190, Glu194, Glu226, and Glu230 each coordinate Mg(2+). Ser251 is a substrate binding site.

Belongs to the ketol-acid reductoisomerase family. The cofactor is Mg(2+).

It catalyses the reaction (2R)-2,3-dihydroxy-3-methylbutanoate + NADP(+) = (2S)-2-acetolactate + NADPH + H(+). It carries out the reaction (2R,3R)-2,3-dihydroxy-3-methylpentanoate + NADP(+) = (S)-2-ethyl-2-hydroxy-3-oxobutanoate + NADPH + H(+). It participates in amino-acid biosynthesis; L-isoleucine biosynthesis; L-isoleucine from 2-oxobutanoate: step 2/4. The protein operates within amino-acid biosynthesis; L-valine biosynthesis; L-valine from pyruvate: step 2/4. Involved in the biosynthesis of branched-chain amino acids (BCAA). Catalyzes an alkyl-migration followed by a ketol-acid reduction of (S)-2-acetolactate (S2AL) to yield (R)-2,3-dihydroxy-isovalerate. In the isomerase reaction, S2AL is rearranged via a Mg-dependent methyl migration to produce 3-hydroxy-3-methyl-2-ketobutyrate (HMKB). In the reductase reaction, this 2-ketoacid undergoes a metal-dependent reduction by NADPH to yield (R)-2,3-dihydroxy-isovalerate. In Methanobrevibacter smithii (strain ATCC 35061 / DSM 861 / OCM 144 / PS), this protein is Ketol-acid reductoisomerase (NADP(+)).